The primary structure comprises 3461 residues: Abnormal spindle-like microcephaly-associated protein homolog (3461 aa).

The interval Met1–Glu30 is disordered. A phosphoserine mark is found at Ser279, Ser282, Ser367, Ser392, Ser426, and Ser606. Residues Lys921–Gln1057 form the Calponin-homology (CH) 1 domain. Residues Val1058–Thr1077 are a coiled coil. A Phosphoserine modification is found at Ser1104. The region spanning Ser1111–Leu1262 is the Calponin-homology (CH) 2 domain. IQ domains follow at residues Glu1267–Ala1296, Gln1348–Gln1379, Leu1488–Thr1517, Arg1511–Ala1540, Lys1538–Ser1569, Leu1583–Gln1614, Thr1633–Lys1662, Ile1656–Lys1685, Met1729–Ser1758, Gln1752–Gln1783, Met1775–Arg1804, Val1802–Lys1831, Gln1825–Lys1854, Thr1875–Arg1904, Glu1898–Gln1929, Leu1948–Gln1979, Gln1971–Gln2002, Thr2021–Ala2050, Tyr2044–Gln2075, Leu2094–Lys2125, Met2117–Gln2148, Ile2167–Gln2198, Met2190–Thr2219, Leu2240–Gln2271, Leu2313–Gln2344, Met2336–Gln2367, Gln2386–Gln2417, Met2409–Gln2440, Val2459–Gln2490, Gln2532–Gln2563, Arg2666–Gln2697, Met2689–Gln2720, Leu2739–Ala2768, Gln2837–Thr2866, Gln2860–Gln2891, Val2910–Lys2939, Ile2933–Ala2964, Lys2955–Gln2986, Arg3030–Thr3059, Leu3080–His3111, Gln3182–Lys3211, and Ile3205–Ser3236.

Its subcellular location is the cytoplasm. It localises to the cytoskeleton. It is found in the spindle. The protein resides in the nucleus. Its function is as follows. Probable role in mitotic spindle regulation and coordination of mitotic processes. May have a preferential role in regulating neurogenesis. This chain is Abnormal spindle-like microcephaly-associated protein homolog (ASPM), found in Felis catus (Cat).